The following is a 156-amino-acid chain: Type IV major fimbrial protein FimA (156 aa).

A propeptide spans 1 to 7 (MKSLQKG) (leader sequence). Residue F8 is modified to N-methylphenylalanine. A helical membrane pass occupies residues 8–28 (FTLIELMIVVAIIGILAAIAI). Disulfide bonds link C57–C67 and C141–C154.

Belongs to the N-Me-Phe pilin family. In terms of assembly, the pili are polar flexible filaments of about 5.4 nanometers diameter and 2.5 micrometers average length; they consist of only a single polypeptide chain arranged in a helical configuration of five subunits per turn in the assembled pilus.

Its subcellular location is the fimbrium. It localises to the membrane. In terms of biological role, major component of the type IV fimbriae that plays an essential role in twitching motility, natural transformation, and protease secretion. This chain is Type IV major fimbrial protein FimA (fimA), found in Dichelobacter nodosus (Bacteroides nodosus).